Reading from the N-terminus, the 231-residue chain is PIAGSMVLAAILLKLGGYGIIRMMQIMPTTKTDMFLPFIVLALWGAILANLTCLQQTDLKSLIAYSSVSHMGLVVAAIMIQTPWGLSGAMTLMIAHGFTSSALFCLANTTYERTHTRILILTRGFHNILPMATTWWLLTNLMNIAIPPTMNFTSELLIMSALFSWCPTTIILLGLSMLITASYSLHMFLSTQMGPTLLNNQTEPTHSREHLLMTLHITPLMMISMKPELIM.

A run of 6 helical transmembrane segments spans residues 1-21 (PIAG…YGII), 34-54 (MFLP…LTCL), 63-85 (IAYS…TPWG), 89-111 (AMTL…NTTY), 128-148 (ILPM…AIPP), and 156-176 (LLIM…LGLS).

Belongs to the complex I subunit 4 family.

It localises to the mitochondrion membrane. The enzyme catalyses a ubiquinone + NADH + 5 H(+)(in) = a ubiquinol + NAD(+) + 4 H(+)(out). Core subunit of the mitochondrial membrane respiratory chain NADH dehydrogenase (Complex I) that is believed to belong to the minimal assembly required for catalysis. Complex I functions in the transfer of electrons from NADH to the respiratory chain. The immediate electron acceptor for the enzyme is believed to be ubiquinone. This is NADH-ubiquinone oxidoreductase chain 4 (MT-ND4) from Gloydius intermedius (Central Asian pit viper).